Reading from the N-terminus, the 208-residue chain is Uracil phosphoribosyltransferase (208 aa).

5-phospho-alpha-D-ribose 1-diphosphate is bound by residues R78, R103, and 130-138 (DPMLATGGS). Residues I193 and 198–200 (GDA) each bind uracil. D199 serves as a coordination point for 5-phospho-alpha-D-ribose 1-diphosphate.

The protein belongs to the UPRTase family. The cofactor is Mg(2+).

The enzyme catalyses UMP + diphosphate = 5-phospho-alpha-D-ribose 1-diphosphate + uracil. It participates in pyrimidine metabolism; UMP biosynthesis via salvage pathway; UMP from uracil: step 1/1. Its activity is regulated as follows. Allosterically activated by GTP. In terms of biological role, catalyzes the conversion of uracil and 5-phospho-alpha-D-ribose 1-diphosphate (PRPP) to UMP and diphosphate. This chain is Uracil phosphoribosyltransferase, found in Desulfovibrio desulfuricans (strain ATCC 27774 / DSM 6949 / MB).